The primary structure comprises 225 residues: 2-C-methyl-D-erythritol 4-phosphate cytidylyltransferase (225 aa).

Belongs to the IspD/TarI cytidylyltransferase family. IspD subfamily.

It carries out the reaction 2-C-methyl-D-erythritol 4-phosphate + CTP + H(+) = 4-CDP-2-C-methyl-D-erythritol + diphosphate. It participates in isoprenoid biosynthesis; isopentenyl diphosphate biosynthesis via DXP pathway; isopentenyl diphosphate from 1-deoxy-D-xylulose 5-phosphate: step 2/6. In terms of biological role, catalyzes the formation of 4-diphosphocytidyl-2-C-methyl-D-erythritol from CTP and 2-C-methyl-D-erythritol 4-phosphate (MEP). The polypeptide is 2-C-methyl-D-erythritol 4-phosphate cytidylyltransferase (Chromobacterium violaceum (strain ATCC 12472 / DSM 30191 / JCM 1249 / CCUG 213 / NBRC 12614 / NCIMB 9131 / NCTC 9757 / MK)).